The chain runs to 310 residues: MASYASEVKKELTSIEVHPEHAKAELAAFLRMNAVLSRHDGQMSLDIVTENPAIARRIFSLIKTAYGFEPQLIVTRKMKLKKNHQYLVRVAQMVSEIMADLEIYSPKKGFITGVPDKIKYSEQRSMSYLRGGFLASGSVNNPETSRYHLEIYCTYANHSQDLQEIMNKYFDLNAKVTARRSGSIVYLKEAEKIGDFLHVVGAVNAMLAFEDLRIMRDMRNSVNRLVNCDTANLRKTAGAAAKQVEDIELIDQKQGLESLPEKLASLARFRLQHPELSLKELAEQVPDGPISKSGVNHRLKKLHEIAENLR.

Residues 277–310 (SLKELAEQVPDGPISKSGVNHRLKKLHEIAENLR) constitute a DNA-binding region (H-T-H motif).

Belongs to the WhiA family.

Functionally, involved in cell division and chromosome segregation. The polypeptide is Probable cell division protein WhiA (Lactobacillus delbrueckii subsp. bulgaricus (strain ATCC BAA-365 / Lb-18)).